An 810-amino-acid polypeptide reads, in one-letter code: Glycerol-3-phosphate acyltransferase (810 aa).

The HXXXXD motif motif lies at 305–310 (CHRSHI).

This sequence belongs to the GPAT/DAPAT family.

The protein resides in the cell inner membrane. It catalyses the reaction sn-glycerol 3-phosphate + an acyl-CoA = a 1-acyl-sn-glycero-3-phosphate + CoA. It functions in the pathway phospholipid metabolism; CDP-diacylglycerol biosynthesis; CDP-diacylglycerol from sn-glycerol 3-phosphate: step 1/3. The sequence is that of Glycerol-3-phosphate acyltransferase from Haemophilus influenzae (strain 86-028NP).